A 220-amino-acid polypeptide reads, in one-letter code: Large ribosomal subunit protein uL3 (220 aa).

The disordered stretch occupies residues 61–81 (KGSKSNKYANKPAEGHAKKAD).

This sequence belongs to the universal ribosomal protein uL3 family. As to quaternary structure, part of the 50S ribosomal subunit. Forms a cluster with proteins L14 and L19.

Its function is as follows. One of the primary rRNA binding proteins, it binds directly near the 3'-end of the 23S rRNA, where it nucleates assembly of the 50S subunit. The chain is Large ribosomal subunit protein uL3 from Staphylococcus epidermidis (strain ATCC 12228 / FDA PCI 1200).